A 425-amino-acid chain; its full sequence is Serine hydroxymethyltransferase (425 aa).

(6S)-5,6,7,8-tetrahydrofolate contacts are provided by residues leucine 122 and 126–128; that span reads GHL. An N6-(pyridoxal phosphate)lysine modification is found at lysine 231. 355-357 is a binding site for (6S)-5,6,7,8-tetrahydrofolate; sequence SPF.

It belongs to the SHMT family. As to quaternary structure, homodimer. It depends on pyridoxal 5'-phosphate as a cofactor.

It localises to the cytoplasm. It catalyses the reaction (6R)-5,10-methylene-5,6,7,8-tetrahydrofolate + glycine + H2O = (6S)-5,6,7,8-tetrahydrofolate + L-serine. The protein operates within one-carbon metabolism; tetrahydrofolate interconversion. It functions in the pathway amino-acid biosynthesis; glycine biosynthesis; glycine from L-serine: step 1/1. Catalyzes the reversible interconversion of serine and glycine with tetrahydrofolate (THF) serving as the one-carbon carrier. This reaction serves as the major source of one-carbon groups required for the biosynthesis of purines, thymidylate, methionine, and other important biomolecules. Also exhibits THF-independent aldolase activity toward beta-hydroxyamino acids, producing glycine and aldehydes, via a retro-aldol mechanism. The polypeptide is Serine hydroxymethyltransferase (Rippkaea orientalis (strain PCC 8801 / RF-1) (Cyanothece sp. (strain PCC 8801))).